A 377-amino-acid polypeptide reads, in one-letter code: Succinyl-diaminopimelate desuccinylase (377 aa).

His-68 contributes to the Zn(2+) binding site. Asp-70 is an active-site residue. Zn(2+) is bound at residue Asp-101. Glu-135 functions as the Proton acceptor in the catalytic mechanism. Residues Glu-136, Glu-164, and His-350 each contribute to the Zn(2+) site.

This sequence belongs to the peptidase M20A family. DapE subfamily. As to quaternary structure, homodimer. Requires Zn(2+) as cofactor. The cofactor is Co(2+).

It carries out the reaction N-succinyl-(2S,6S)-2,6-diaminopimelate + H2O = (2S,6S)-2,6-diaminopimelate + succinate. The protein operates within amino-acid biosynthesis; L-lysine biosynthesis via DAP pathway; LL-2,6-diaminopimelate from (S)-tetrahydrodipicolinate (succinylase route): step 3/3. Functionally, catalyzes the hydrolysis of N-succinyl-L,L-diaminopimelic acid (SDAP), forming succinate and LL-2,6-diaminopimelate (DAP), an intermediate involved in the bacterial biosynthesis of lysine and meso-diaminopimelic acid, an essential component of bacterial cell walls. The sequence is that of Succinyl-diaminopimelate desuccinylase from Acinetobacter baylyi (strain ATCC 33305 / BD413 / ADP1).